A 464-amino-acid polypeptide reads, in one-letter code: MIIRDIMEDPENEGPHNMRSDFEPLLSVLRLRDYETGDIIEFDSTEASEEALSDITEFGSTEASEAHFEEPYSARIKKVEKEINELAEKICNLGIKESDTGLAPPNQWDLVSDKQMMQEEQPLLVATCTQIISPNTEDAKYVVDIKKIGKYVVGLGDKASPTDIEAGMRVGVDQKKYQIQIPLPPKIDPSVTMMTVEEKPDATYSDIGGCKEQIEKIREVVELPMLHPEKFVRLGIDPPKGVLCYGPPGSGKTLVARAVANRTGACFIRVVGSELVQKYIGEGARMVRELFQMARSKKACILFFDEIDAIGGARFDDGVGSDNEVQRTMLEILYQLDGFDARGNIKVLMATNRPDILDPALLRPGRLDRKVEFCLPDLEGRTQIFKIHTRTMSCERDIRFELLAGLCPNSTGADIRSVCIEAGMYAIGARRKSVTEKDFLDAVNKVVKGYQKFSATPKYMAYYI.

246–253 (GPPGSGKT) serves as a coordination point for ATP. A Glycyl lysine isopeptide (Lys-Gly) (interchain with G-Cter in ubiquitin) cross-link involves residue lysine 452.

Belongs to the AAA ATPase family. As to quaternary structure, component of the 19S regulatory particle (RP/PA700) base subcomplex of the 26S proteasome. The 26S proteasome is composed of a core protease (CP), known as the 20S proteasome, capped at one or both ends by the 19S regulatory particle (RP/PA700). The RP/PA700 complex is composed of at least 17 different subunits in two subcomplexes, the base and the lid, which form the portions proximal and distal to the 20S proteolytic core, respectively.

The protein localises to the cytoplasm. It localises to the nucleus. Functionally, the 26S proteasome is involved in the ATP-dependent degradation of ubiquitinated proteins. The regulatory (or ATPase) complex confers ATP dependency and substrate specificity to the 26S complex. This is 26S proteasome regulatory subunit 7 homolog B (RPT1B) from Arabidopsis thaliana (Mouse-ear cress).